A 172-amino-acid chain; its full sequence is Adenine phosphoribosyltransferase (172 aa).

It belongs to the purine/pyrimidine phosphoribosyltransferase family. Homodimer.

It is found in the cytoplasm. The enzyme catalyses AMP + diphosphate = 5-phospho-alpha-D-ribose 1-diphosphate + adenine. It functions in the pathway purine metabolism; AMP biosynthesis via salvage pathway; AMP from adenine: step 1/1. In terms of biological role, catalyzes a salvage reaction resulting in the formation of AMP, that is energically less costly than de novo synthesis. The protein is Adenine phosphoribosyltransferase of Prochlorococcus marinus (strain SARG / CCMP1375 / SS120).